The sequence spans 608 residues: Ceramide kinase (608 aa).

One can recognise a DAGKc domain in the interval 160–367; the sequence is ERPRNLLVFV…LDAMQVVRWK (208 aa). ATP contacts are provided by residues 170-174, T201, and 230-236; these read HPKSG and GDGFFNE. 229–232 is a substrate binding site; that stretch reads GGDG. D231 functions as the Proton donor/acceptor in the catalytic mechanism. The disordered stretch occupies residues 254–280; sequence PSDSFNSVQSRGSSSVPEPGDEVHETD. Polar residues predominate over residues 255–269; that stretch reads SDSFNSVQSRGSSSV. S329 is an ATP binding site.

It depends on Ca(2+) as a cofactor.

The catalysed reaction is an N-acylsphing-4-enine + ATP = an N-acylsphing-4-enine 1-phosphate + ADP + H(+). Its function is as follows. Catalyzes specifically the phosphorylation of ceramide to form ceramide 1-phosphate. Possesses high activity on ceramide analogs (C6, C8 synthetic ceramides) and lower activity on C6 and C8 dihydroceramides. Has weak activity on natural ceramides (a mixture of ceramides from bovine brain) and the synthetic substrate C2 ceramide. Has very poor activity on diacylglycerol and sphingosine. Ceramide is a critical sphingolipid metabolite that induces programmed cell death (PCD) in plants and ceramide-1-phosphate has a PCD suppressive effect. Thus, ceramide phosphorylation plays a role in the modulation of PCD and CERK activity is crucial for the maintenance of cell viability. This is Ceramide kinase (CERK) from Arabidopsis thaliana (Mouse-ear cress).